The chain runs to 525 residues: GMP synthase [glutamine-hydrolyzing] (525 aa).

The Glutamine amidotransferase type-1 domain occupies 12–203 (TVLVVDFGAQ…LYRGAGLTPS (192 aa)). The active-site Nucleophile is the C89. Active-site residues include H177 and E179. The GMPS ATP-PPase domain maps to 204–399 (WTTGNVIDEQ…LGLPDEIVQR (196 aa)). Residue 231-237 (SGGVDSA) coordinates ATP.

Homodimer.

It carries out the reaction XMP + L-glutamine + ATP + H2O = GMP + L-glutamate + AMP + diphosphate + 2 H(+). Its pathway is purine metabolism; GMP biosynthesis; GMP from XMP (L-Gln route): step 1/1. Catalyzes the synthesis of GMP from XMP. The chain is GMP synthase [glutamine-hydrolyzing] from Streptomyces avermitilis (strain ATCC 31267 / DSM 46492 / JCM 5070 / NBRC 14893 / NCIMB 12804 / NRRL 8165 / MA-4680).